The following is a 248-amino-acid chain: 2,3-bisphosphoglycerate-dependent phosphoglycerate mutase (248 aa).

Residues 8-15 (RHGESQWN), 21-22 (TG), arginine 60, 87-90 (ERHY), lysine 98, 114-115 (RR), and 183-184 (GN) contribute to the substrate site. Histidine 9 (tele-phosphohistidine intermediate) is an active-site residue. Glutamate 87 acts as the Proton donor/acceptor in catalysis.

This sequence belongs to the phosphoglycerate mutase family. BPG-dependent PGAM subfamily. As to quaternary structure, homodimer.

The catalysed reaction is (2R)-2-phosphoglycerate = (2R)-3-phosphoglycerate. The protein operates within carbohydrate degradation; glycolysis; pyruvate from D-glyceraldehyde 3-phosphate: step 3/5. In terms of biological role, catalyzes the interconversion of 2-phosphoglycerate and 3-phosphoglycerate. The chain is 2,3-bisphosphoglycerate-dependent phosphoglycerate mutase from Teredinibacter turnerae (strain ATCC 39867 / T7901).